The primary structure comprises 144 residues: Large ribosomal subunit protein uL13 (144 aa).

The protein belongs to the universal ribosomal protein uL13 family. Part of the 50S ribosomal subunit.

Its function is as follows. This protein is one of the early assembly proteins of the 50S ribosomal subunit, although it is not seen to bind rRNA by itself. It is important during the early stages of 50S assembly. This Nitrosomonas eutropha (strain DSM 101675 / C91 / Nm57) protein is Large ribosomal subunit protein uL13.